A 71-amino-acid chain; its full sequence is Long neurotoxin 1 (71 aa).

Cystine bridges form between Cys3–Cys20, Cys14–Cys41, Cys26–Cys30, Cys45–Cys56, and Cys57–Cys62.

It belongs to the three-finger toxin family. Long-chain subfamily. Type II alpha-neurotoxin sub-subfamily. Expressed by the venom gland.

Its subcellular location is the secreted. Functionally, binds with high affinity to muscular (alpha-1/CHRNA1) and neuronal (alpha-7/CHRNA7) nicotinic acetylcholine receptor (nAChR) and inhibits acetylcholine from binding to the receptor, thereby impairing neuromuscular and neuronal transmission. This is Long neurotoxin 1 from Naja naja (Indian cobra).